Here is a 279-residue protein sequence, read N- to C-terminus: MDRELVMRFLGTGGAVPSKDRSHPGLLVEFSGTKLLIDCGEGTQRRAMEQGVTIHDVDAVLLTHHHVDHVAGLLPLATTVDLLHGRRLKVYGPTAGSESALDISDLEVIEYREVNPGDEVEIGDLRVLVYESEHGVPTVDYRIETPKIPGKADPKYIRRVPPSKRREVLLRGERPYSLTKPGKISVYVKGDGRPADPENVRGCQVLVHEACFEDHEEAVRYLHSTHLEAAEVAREAGVDLLVLTHLSTKVDPERMREEAREVFPVVVVARDGLMVRVRR.

Residues His-64, His-66, Asp-68, His-69, His-134, Asp-191, and His-245 each coordinate Zn(2+). The active-site Proton acceptor is the Asp-68.

Belongs to the RNase Z family. As to quaternary structure, homodimer. The cofactor is Zn(2+).

It carries out the reaction Endonucleolytic cleavage of RNA, removing extra 3' nucleotides from tRNA precursor, generating 3' termini of tRNAs. A 3'-hydroxy group is left at the tRNA terminus and a 5'-phosphoryl group is left at the trailer molecule.. In terms of biological role, zinc phosphodiesterase, which displays some tRNA 3'-processing endonuclease activity. Probably involved in tRNA maturation, by removing a 3'-trailer from precursor tRNA. The polypeptide is Ribonuclease Z (Methanopyrus kandleri (strain AV19 / DSM 6324 / JCM 9639 / NBRC 100938)).